The primary structure comprises 392 residues: Tryptophan synthase beta chain (392 aa).

Position 84 is an N6-(pyridoxal phosphate)lysine (Lys84).

Belongs to the TrpB family. Tetramer of two alpha and two beta chains. It depends on pyridoxal 5'-phosphate as a cofactor.

The enzyme catalyses (1S,2R)-1-C-(indol-3-yl)glycerol 3-phosphate + L-serine = D-glyceraldehyde 3-phosphate + L-tryptophan + H2O. It participates in amino-acid biosynthesis; L-tryptophan biosynthesis; L-tryptophan from chorismate: step 5/5. Functionally, the beta subunit is responsible for the synthesis of L-tryptophan from indole and L-serine. In Campylobacter jejuni subsp. doylei (strain ATCC BAA-1458 / RM4099 / 269.97), this protein is Tryptophan synthase beta chain.